Consider the following 144-residue polypeptide: Transcription antitermination protein NusB (144 aa).

Belongs to the NusB family.

Its function is as follows. Involved in transcription antitermination. Required for transcription of ribosomal RNA (rRNA) genes. Binds specifically to the boxA antiterminator sequence of the ribosomal RNA (rrn) operons. The chain is Transcription antitermination protein NusB from Histophilus somni (strain 129Pt) (Haemophilus somnus).